A 177-amino-acid polypeptide reads, in one-letter code: Translation initiation factor IF-3 (177 aa).

Belongs to the IF-3 family. Monomer.

Its subcellular location is the cytoplasm. Functionally, IF-3 binds to the 30S ribosomal subunit and shifts the equilibrium between 70S ribosomes and their 50S and 30S subunits in favor of the free subunits, thus enhancing the availability of 30S subunits on which protein synthesis initiation begins. The chain is Translation initiation factor IF-3 from Elusimicrobium minutum (strain Pei191).